We begin with the raw amino-acid sequence, 319 residues long: MASNEVLVLRGTLEGHNGWVTSLATSAGQPNLLLSASRDKTLISWKLTGDDQKFGVPVRSFKGHSHIVQDCTLTADGAYALSASWDKTLRLWDVATGETYQRFVGHKSDVMSVDIDKKASMIISGSRDKTIKVWTIKGQCLATLLGHNDWVSQVRVVPNEKADDDSVTIISAGNDKMVKAWNLNQFQIEADFIGHNSNINTLTASPDGTLIASAGKDGEIMLWNLAAKKAMYTLSAQDEVFSLAFSPNRYWLAAATATGIKVFSLDPQYLVDDLRPEFAGYSKAAEPHAVSLAWSADGQTLFAGYTDNVIRVWQVMTAN.

Ala2 carries the post-translational modification N-acetylalanine. 7 WD repeats span residues 15-55 (GHNG…QKFG), 63-102 (GHSH…TYQR), 105-145 (GHKS…ATLL), 147-191 (HNDW…IEAD), 194-233 (GHNS…AMYT), 235-275 (SAQD…DDLR), and 284-319 (AAEP…MTAN). Residues Lys46 and Lys53 each participate in a glycyl lysine isopeptide (Lys-Gly) (interchain with G-Cter in ubiquitin) cross-link. Residue Thr96 is modified to Phosphothreonine. Residues Lys107, Lys137, and Lys161 each participate in a glycyl lysine isopeptide (Lys-Gly) (interchain with G-Cter in ubiquitin) cross-link. Phosphothreonine is present on Thr168.

The protein belongs to the WD repeat G protein beta family. Ribosomal protein RACK1 subfamily. Component of the small ribosomal subunit (SSU). Mature yeast ribosomes consist of a small (40S) and a large (60S) subunit. The 40S small subunit contains 1 molecule of ribosomal RNA (18S rRNA) and 33 different proteins (encoded by 57 genes). The large 60S subunit contains 3 rRNA molecules (25S, 5.8S and 5S rRNA) and 46 different proteins (encoded by 81 genes). RACK1 is located at the head of the SSU in the vicinity of the mRNA exit channel. RACK1 interacts with the mRNA-binding protein SCP16. RACK1 also exists simultaneously as a homodimer in a cytosolic non-ribosome-bound form.

It localises to the cytoplasm. Functionally, component of the ribosome, a large ribonucleoprotein complex responsible for the synthesis of proteins in the cell. The small ribosomal subunit (SSU) binds messenger RNAs (mRNAs) and translates the encoded message by selecting cognate aminoacyl-transfer RNA (tRNA) molecules. The large subunit (LSU) contains the ribosomal catalytic site termed the peptidyl transferase center (PTC), which catalyzes the formation of peptide bonds, thereby polymerizing the amino acids delivered by tRNAs into a polypeptide chain. The nascent polypeptides leave the ribosome through a tunnel in the LSU and interact with protein factors that function in enzymatic processing, targeting, and the membrane insertion of nascent chains at the exit of the ribosomal tunnel. Located at the head of the 40S ribosomal subunit in the vicinity of the mRNA exit channel, RACK1 serves as a scaffold protein that can recruit other proteins to the ribosome. Involved in induction of the ribosome quality control (RQC) pathway; a pathway that degrades nascent peptide chains during problematic translation. Involved in the negative regulation of translation of a specific subset of proteins. The sequence is that of Small ribosomal subunit protein RACK1 from Saccharomyces cerevisiae (strain ATCC 204508 / S288c) (Baker's yeast).